The primary structure comprises 479 residues: 3-isopropylmalate dehydratase large subunit (479 aa).

Cys-350, Cys-415, and Cys-418 together coordinate [4Fe-4S] cluster.

It belongs to the aconitase/IPM isomerase family. LeuC type 1 subfamily. Heterodimer of LeuC and LeuD. Requires [4Fe-4S] cluster as cofactor.

It carries out the reaction (2R,3S)-3-isopropylmalate = (2S)-2-isopropylmalate. Its pathway is amino-acid biosynthesis; L-leucine biosynthesis; L-leucine from 3-methyl-2-oxobutanoate: step 2/4. Its function is as follows. Catalyzes the isomerization between 2-isopropylmalate and 3-isopropylmalate, via the formation of 2-isopropylmaleate. This chain is 3-isopropylmalate dehydratase large subunit, found in Caulobacter vibrioides (strain ATCC 19089 / CIP 103742 / CB 15) (Caulobacter crescentus).